The chain runs to 146 residues: uncharacterized protein (146 aa).

Residues 7–146 (LDINYKTDEL…DGHDVLVWTP (140 aa)) form the N-acetyltransferase domain.

This is an uncharacterized protein from Staphylococcus saprophyticus subsp. saprophyticus (strain ATCC 15305 / DSM 20229 / NCIMB 8711 / NCTC 7292 / S-41).